Here is an 80-residue protein sequence, read N- to C-terminus: Conotoxin ArMKLT2-0321 (80 aa).

Residues 1–21 form the signal peptide; it reads MKLTCVLIIAMLFLIVCQLNT. The propeptide occupies 22-48; sequence ADDSTDKQEYRAVKLRDAMRNFKGSKR. 3 disulfide bridges follow: Cys50/Cys63, Cys57/Cys68, and Cys62/Cys77.

The protein belongs to the conotoxin O1 superfamily. Expressed by the venom duct.

It localises to the secreted. The polypeptide is Conotoxin ArMKLT2-0321 (Conus arenatus (Sand-dusted cone)).